The primary structure comprises 496 residues: Glutathione reductase, cytosolic (496 aa).

FAD contacts are provided by serine 32, glycine 33, glutamate 52, threonine 69, cysteine 70, and lysine 78. Serine 32 lines the glutathione pocket. A disulfide bridge links cysteine 70 with cysteine 75. Tyrosine 127 contacts glutathione. Glycine 143 contacts FAD. NADP(+) contacts are provided by glycine 208, isoleucine 211, glutamate 214, arginine 231, arginine 237, and glycine 294. The FAD site is built by aspartate 335 and threonine 343. Alanine 373 is an NADP(+) binding site. Histidine 469 is a binding site for FAD. Histidine 469 acts as the Proton acceptor in catalysis.

The protein belongs to the class-I pyridine nucleotide-disulfide oxidoreductase family. As to quaternary structure, homodimer. It depends on FAD as a cofactor.

Its subcellular location is the cytoplasm. The enzyme catalyses 2 glutathione + NADP(+) = glutathione disulfide + NADPH + H(+). Functionally, catalyzes the reduction of glutathione disulfide (GSSG) to reduced glutathione (GSH). Constitutes the major mechanism to maintain a high GSH:GSSG ratio in the cytosol. The polypeptide is Glutathione reductase, cytosolic (GRC2) (Oryza sativa subsp. japonica (Rice)).